Consider the following 244-residue polypeptide: 7-cyano-7-deazaguanine synthase (244 aa).

F14–V24 contributes to the ATP binding site. Positions 202, 217, 220, and 223 each coordinate Zn(2+).

It belongs to the QueC family. Zn(2+) serves as cofactor.

It carries out the reaction 7-carboxy-7-deazaguanine + NH4(+) + ATP = 7-cyano-7-deazaguanine + ADP + phosphate + H2O + H(+). The protein operates within purine metabolism; 7-cyano-7-deazaguanine biosynthesis. Catalyzes the ATP-dependent conversion of 7-carboxy-7-deazaguanine (CDG) to 7-cyano-7-deazaguanine (preQ(0)). This Burkholderia lata (strain ATCC 17760 / DSM 23089 / LMG 22485 / NCIMB 9086 / R18194 / 383) protein is 7-cyano-7-deazaguanine synthase.